Consider the following 261-residue polypeptide: Tyrosine phosphatase-like protein H5 (261 aa).

Residues 26-261 (LIKKEHDKVL…ESVEQEYFVP (236 aa)) enclose the Tyrosine-protein phosphatase domain.

This sequence belongs to the protein-tyrosine phosphatase family.

This Microplitis demolitor bracovirus (isolate Webb) (MdBV) protein is Tyrosine phosphatase-like protein H5 (H6).